Consider the following 289-residue polypeptide: Oxaloacetate decarboxylase (289 aa).

Serine 47 serves as a coordination point for substrate. Residue aspartate 85 coordinates Mg(2+). Substrate contacts are provided by arginine 156 and histidine 232.

Belongs to the isocitrate lyase/PEP mutase superfamily. Oxaloacetate decarboxylase family. Homotetramer; dimer of dimers. Requires Mg(2+) as cofactor.

It catalyses the reaction oxaloacetate + H(+) = pyruvate + CO2. Functionally, catalyzes the decarboxylation of oxaloacetate into pyruvate. Seems to play a role in maintaining cellular concentrations of bicarbonate and pyruvate. The sequence is that of Oxaloacetate decarboxylase from Rhodopseudomonas palustris (strain BisA53).